The primary structure comprises 963 residues: Putative RNA Helicase B962L (963 aa).

Residues 43–229 enclose the Helicase ATP-binding domain; it reads IPTSLADRVL…FGIGKENIIL (187 aa). ATP is bound at residue 56-63; sequence SRTGSGKS. Residues 167–170 carry the DEAH box motif; that stretch reads DEAH. Residues 253 to 459 enclose the Helicase C-terminal domain; the sequence is ACETALTIHK…TIKKNKEGVF (207 aa). A helical membrane pass occupies residues 521–541; sequence GYFWQAAISDIATILAVVSVV.

Belongs to the DEAD box helicase family. DEAH subfamily.

It is found in the host membrane. The protein resides in the virion. The enzyme catalyses ATP + H2O = ADP + phosphate + H(+). The sequence is that of Putative RNA Helicase B962L from Ornithodoros (relapsing fever ticks).